The sequence spans 558 residues: uncharacterized protein (558 aa).

The region spanning 7 to 206 is the DhaL domain; it reads SNFIDMLRLG…FACFLEGMLS (200 aa).

This is an uncharacterized protein from Mycoplasma pneumoniae (strain ATCC 29342 / M129 / Subtype 1) (Mycoplasmoides pneumoniae).